The sequence spans 231 residues: MRQPAVRLVRLGRVPYAELLGLQDRWLRRLQAEPGIEAPSGTEAGALLLCEPAGPVYTAGLRGGLTPEETARLRALGAEVRVTGRGGLATFHGPGQLLCHPVLDLRRLGLRLRMHVASLEACAVRLCELQGLQDARARPPPYTGVWLDDRKICAIGVRCGRHITSHGLALNCSTDLTWFEHIVPCGLVGTGVTSLSKELQRHVTVEEVMPPFLVAFKEIYKCTLISEDSPN.

Residues 1-31 constitute a mitochondrion transit peptide; sequence MRQPAVRLVRLGRVPYAELLGLQDRWLRRLQ. The 184-residue stretch at 41 to 224 folds into the BPL/LPL catalytic domain; the sequence is GTEAGALLLC…AFKEIYKCTL (184 aa). Residues 85 to 92, 154 to 156, and 167 to 169 each bind substrate; these read RGGLATFH, AIG, and GLA. Cysteine 185 serves as the catalytic Acyl-thioester intermediate.

The protein belongs to the LipB family.

It is found in the mitochondrion. The enzyme catalyses octanoyl-[ACP] + L-lysyl-[protein] = N(6)-octanoyl-L-lysyl-[protein] + holo-[ACP] + H(+). The protein operates within protein modification; protein lipoylation via endogenous pathway; protein N(6)-(lipoyl)lysine from octanoyl-[acyl-carrier-protein]: step 1/2. Catalyzes the transfer of endogenously produced octanoic acid from octanoyl-acyl-carrier-protein (octanoyl-ACP) onto the lipoyl domains of lipoate-dependent enzymes such as the protein H of the glycine cleavage system (GCSH). Lipoyl-ACP can also act as a substrate although octanoyl-ACP is likely to be the physiological substrate. The chain is Octanoyl-[acyl-carrier-protein]:protein N-octanoyltransferase LIPT2, mitochondrial from Homo sapiens (Human).